A 189-amino-acid polypeptide reads, in one-letter code: Movement protein p22 (189 aa).

It belongs to the tombusvirus/aureusvirus movement protein p22 family. In terms of assembly, interacts with host protein HFI22. Post-translationally, phosphorylated.

It is found in the host membrane. Functionally, cell-to-cell movement. Displays RNA-binding activity. In Capsicum annuum (Capsicum pepper), this protein is Movement protein p22.